Reading from the N-terminus, the 216-residue chain is MQPDLALAPEAVLDAAGFQALVGATDAQIEDLTRFQTLLAEWNEVMNLVGPLTIATYWTRHALDSAQLIPLAPEATAWADLGAGAGLPGVVLAILLKGRAGAKVHLVESMIKRCRFLEVVAKDLDLPVQIHNARAEDLKLKVDIVTARACAPMTKLLGFAEPYLRNGAVGLFLKGQDVETELSEARKAWTFESELRTSQSDPRGRIVQVKRLSRVR.

Residues Gly-82, Leu-87, 135–136, and Arg-148 contribute to the S-adenosyl-L-methionine site; that span reads AE.

Belongs to the methyltransferase superfamily. RNA methyltransferase RsmG family.

The protein localises to the cytoplasm. The enzyme catalyses guanosine(527) in 16S rRNA + S-adenosyl-L-methionine = N(7)-methylguanosine(527) in 16S rRNA + S-adenosyl-L-homocysteine. In terms of biological role, specifically methylates the N7 position of guanine in position 527 of 16S rRNA. The chain is Ribosomal RNA small subunit methyltransferase G from Caulobacter vibrioides (strain ATCC 19089 / CIP 103742 / CB 15) (Caulobacter crescentus).